The following is a 73-amino-acid chain: uncharacterized protein (73 aa).

This is an uncharacterized protein from Caprine arthritis encephalitis virus (CAEV).